A 31-amino-acid polypeptide reads, in one-letter code: Photosystem II reaction center protein T (31 aa).

Residues 3-23 (ALVYTFLLIGTLGIIFFAIFF) traverse the membrane as a helical segment.

It belongs to the PsbT family. PSII is composed of 1 copy each of membrane proteins PsbA, PsbB, PsbC, PsbD, PsbE, PsbF, PsbH, PsbI, PsbJ, PsbK, PsbL, PsbM, PsbT, PsbY, PsbZ, Psb30/Ycf12, at least 3 peripheral proteins of the oxygen-evolving complex and a large number of cofactors. It forms dimeric complexes.

Its subcellular location is the plastid. The protein localises to the chloroplast thylakoid membrane. In terms of biological role, found at the monomer-monomer interface of the photosystem II (PS II) dimer, plays a role in assembly and dimerization of PSII. PSII is a light-driven water plastoquinone oxidoreductase, using light energy to abstract electrons from H(2)O, generating a proton gradient subsequently used for ATP formation. The sequence is that of Photosystem II reaction center protein T from Stigeoclonium helveticum (Green alga).